The primary structure comprises 570 residues: MESFRRFSLLSFIALLAYFAFLASAEHHVHQFVITPTPVKRLCRTHQSITVNGQYPGPTLVVRNGDSLAITVINRARYNISIHWHGIRQLRNPWADGPEYITQCPIRPGQTYTYRFKIEDQEGTLWWHAHSRWLRATVYGALIIYPRLGSPYPFSMPKRDIPILLGEWWDRNPMDVLKQAQFTGAAANVSDAYTINGQPGDLYRCSRAGTIRFPIFPGETVQLRVINAGMNQELFFSVANHQFTVVETDSAYTKPFTTNVIMIGPGQTTNVLLTANQRPGRYYMAARAYNSANAPFDNTTTTAILQYVNAPTRRGRGRGQIAPVFPVLPGFNDTATATAFTNRLRYWKRAPVPQQVDENLFFTVGLGLINCANPNSPRCQGPNGTRFAASMNNMSFVLPRSNSVMQAYYQGTPGIFTTDFPPVPPVQFDYTGNVSRGLWQPIKGTKAYKLKYKSNVQIVLQDTSIVTPENHPMHLHGYQFYVVGSGFGNFNPRTDPARFNLFDPPERNTIGTPPGGWVAIRFVADNPGAWFMHCHIDSHLGWGLAMVFLVENGRGQLQSVQAPPLDLPRC.

Residues 1 to 25 (MESFRRFSLLSFIALLAYFAFLASA) form the signal peptide. Plastocyanin-like domains follow at residues 33–149 (VITP…PRLG) and 159–310 (RDIP…YVNA). Asn79 carries N-linked (GlcNAc...) asparagine glycosylation. Positions 83, 85, 128, and 130 each coordinate Cu cation. Residues Asn188, Asn298, Asn332, Asn383, Asn393, and Asn433 are each glycosylated (N-linked (GlcNAc...) asparagine). The 136-residue stretch at 419-554 (DFPPVPPVQF…AMVFLVENGR (136 aa)) folds into the Plastocyanin-like 3 domain. Cu cation is bound by residues His471, His474, His476, His533, Cys534, His535, and His539.

Belongs to the multicopper oxidase family. Requires Cu cation as cofactor. As to expression, mostly expressed in roots and siliques.

It is found in the secreted. The protein resides in the extracellular space. Its subcellular location is the apoplast. The enzyme catalyses 4 hydroquinone + O2 = 4 benzosemiquinone + 2 H2O. Functionally, lignin degradation and detoxification of lignin-derived products. In Arabidopsis thaliana (Mouse-ear cress), this protein is Laccase-3 (LAC3).